The sequence spans 134 residues: Small ribosomal subunit protein bS16 (134 aa).

The segment at Ala115 to Gly134 is disordered.

The protein belongs to the bacterial ribosomal protein bS16 family.

This Chlorobaculum tepidum (strain ATCC 49652 / DSM 12025 / NBRC 103806 / TLS) (Chlorobium tepidum) protein is Small ribosomal subunit protein bS16.